The chain runs to 316 residues: Pseudouridine-5'-phosphate glycosidase (316 aa).

Catalysis depends on E31, which acts as the Proton donor. The substrate site is built by K92 and V112. D144 is a binding site for Mn(2+). S146–D148 lines the substrate pocket. K165 (nucleophile) is an active-site residue.

It belongs to the pseudouridine-5'-phosphate glycosidase family. As to quaternary structure, homotrimer. It depends on Mn(2+) as a cofactor.

The enzyme catalyses D-ribose 5-phosphate + uracil = psi-UMP + H2O. In terms of biological role, catalyzes the reversible cleavage of pseudouridine 5'-phosphate (PsiMP) to ribose 5-phosphate and uracil. Functions biologically in the cleavage direction, as part of a pseudouridine degradation pathway. Part of an operon that could be involved in the biosynthesis of the blue pigment indigoidine, which is implicated in pathogenicity and protection from oxidative stress. The sequence is that of Pseudouridine-5'-phosphate glycosidase from Dickeya dadantii (strain 3937) (Erwinia chrysanthemi (strain 3937)).